Here is a 108-residue protein sequence, read N- to C-terminus: Holo-[acyl-carrier-protein] synthase (108 aa).

Mg(2+) is bound by residues Asp9 and Glu52.

It belongs to the P-Pant transferase superfamily. AcpS family. Mg(2+) is required as a cofactor.

The protein resides in the cytoplasm. The catalysed reaction is apo-[ACP] + CoA = holo-[ACP] + adenosine 3',5'-bisphosphate + H(+). Functionally, transfers the 4'-phosphopantetheine moiety from coenzyme A to a Ser of acyl-carrier-protein. The polypeptide is Holo-[acyl-carrier-protein] synthase (Coprothermobacter proteolyticus (strain ATCC 35245 / DSM 5265 / OCM 4 / BT)).